Here is a 165-residue protein sequence, read N- to C-terminus: MVDDSTRKTLSNIPLLQIRAGPREKDIWVQRLKEEYQALIKYVENNKQSGSDWFRLESNKEGTKWFGKCWYMHNLLKYEFDVEFDIPVTYPTTAPEIALPELDGKTAKMYRGGKICLTDHFKPLWARNVPKFGIAHAMALGLAPWLAVEIPDLIEKGVITYKDNC.

Cys-116 (glycyl thioester intermediate) is an active-site residue.

It belongs to the ubiquitin-conjugating enzyme family. UFC1 subfamily.

E2-like enzyme which forms an intermediate with UFM1 via a thioester linkage. This Drosophila virilis (Fruit fly) protein is Ubiquitin-fold modifier-conjugating enzyme 1.